A 273-amino-acid polypeptide reads, in one-letter code: Exosome complex component MTR3 (273 aa).

The interval 1-36 is disordered; sequence MPGDHRRIRGPEESQPPQLYAAEDDETPAARDPTRL.

It belongs to the RNase PH family. In terms of assembly, component of the RNA exosome core complex (Exo-9), composed of EXOSC1, EXOSC2, EXOSC3, EXOSC4, EXOSC5, EXOSC6, EXOSC7, EXOSC8 and EXOSC9; within the complex interacts with EXOSC1, EXOSC7 and EXOSC8. The catalytically inactive RNA exosome core complex (Exo-9) associates with the catalytic subunit EXOSC10/RRP6. Exo-9 may associate with DIS3 to form the nucleolar exosome complex, or DIS3L to form the cytoplasmic exosome complex. Exo-9 is formed by a hexameric base ring consisting of the heterodimers EXOSC4-EXOSC9, EXOSC5-EXOSC8 and EXOSC6-EXOSC7, and a cap ring consisting of EXOSC1, EXOSC2 and EXOSC3. The RNA exosome complex associates with cofactors EXOSC10/RRP6, C1D/RRP47, MPHOSPH6/MPP6 and MTREX/MTR4.

It is found in the cytoplasm. The protein resides in the nucleus. The protein localises to the nucleolus. Non-catalytic component of the RNA exosome complex which has 3'-&gt;5' exoribonuclease activity and participates in a multitude of cellular RNA processing and degradation events. In the nucleus, the RNA exosome complex is involved in proper maturation of stable RNA species such as rRNA, snRNA and snoRNA, in the elimination of RNA processing by-products and non-coding 'pervasive' transcripts, such as antisense RNA species and promoter-upstream transcripts (PROMPTs), and of mRNAs with processing defects, thereby limiting or excluding their export to the cytoplasm. The RNA exosome may be involved in Ig class switch recombination (CSR) and/or Ig variable region somatic hypermutation (SHM) by targeting AICDA deamination activity to transcribed dsDNA substrates. In the cytoplasm, the RNA exosome complex is involved in general mRNA turnover and specifically degrades inherently unstable mRNAs containing AU-rich elements (AREs) within their 3' untranslated regions, and in RNA surveillance pathways, preventing translation of aberrant mRNAs. It seems to be involved in degradation of histone mRNA. The catalytic inactive RNA exosome core complex of 9 subunits (Exo-9) is proposed to play a pivotal role in the binding and presentation of RNA for ribonucleolysis, and to serve as a scaffold for the association with catalytic subunits and accessory proteins or complexes. This chain is Exosome complex component MTR3 (Exosc6), found in Mus musculus (Mouse).